Here is a 494-residue protein sequence, read N- to C-terminus: Ectonucleoside triphosphate diphosphohydrolase 8 (494 aa).

At 1–8 (MRLSWKER) the chain is on the cytoplasmic side. The chain crosses the membrane as a helical span at residues 9–29 (VFMVLLGVAAASGLTMLILIL). Residues 30–465 (VKATNVLLPA…LTQWRAQSYS (436 aa)) are Extracellular-facing. A disulfide bridge connects residues C78 and C102. E168 functions as the Proton acceptor in the catalytic mechanism. A disulfide bridge links C245 with C291. Residues N299 and N303 are each glycosylated (N-linked (GlcNAc...) asparagine). The cysteines at positions 328 and 334 are disulfide-linked. A glycan (N-linked (GlcNAc...) asparagine) is linked at N362. C380 and C402 are disulfide-bonded. The helical transmembrane segment at 466-486 (IWIAGVVFAVLTLVAILGAAA) threads the bilayer. At 487-494 (VQLFWTQD) the chain is on the cytoplasmic side.

The protein belongs to the GDA1/CD39 NTPase family. The cofactor is Ca(2+). Mg(2+) serves as cofactor. N-glycosylated. Present in liver, and at lower level in jejunum and kidney. Limited to the canalicular domain of hepatocytes (at protein level).

It is found in the cell membrane. It carries out the reaction a ribonucleoside 5'-triphosphate + 2 H2O = a ribonucleoside 5'-phosphate + 2 phosphate + 2 H(+). Its function is as follows. Canalicular ectonucleoside NTPDase responsible for the main hepatic NTPDase activity. Ectonucleoside NTPDases catalyze the hydrolysis of gamma- and beta-phosphate residues of nucleotides, playing a central role in concentration of extracellular nucleotides. Has activity toward ATP, ADP, UTP and UDP, but not toward AMP. The chain is Ectonucleoside triphosphate diphosphohydrolase 8 (Entpd8) from Rattus norvegicus (Rat).